Here is a 485-residue protein sequence, read N- to C-terminus: MALLVEKTSSGREYKVKDMSQADFGRLEIELAEVEMPGLVSCVTEFGPSQPLKGARITGSLHMTIQTAVLIETLTALGAEVRWCSCNIFSTQDHAAAAIARDSAAVFAWKGETLQEYWWCTERALDWGPGGGPDLIVDDGGDATLLIHEGVKAEEIFAKNGTFPDPTSTDNPEFQIVLSIIKDGLQVDPKKYHKMKERLVGVSEETTTGVKRLYQMQETGALLFPAINVNDSVTKSKFDNLYGCRHSLPDGLMRATDVMIAGKVAVICGYGDVGKGCAAAMKTAGARVIVTEIDPICALQALMEGLQVLTLEDVVSEADIFCTTTGNKDIIMVDHMRKMKNNAIVCNIGHFDNEIDMLGLETYPGVKRITIKPQTDRWVFPDTNSGIIVLAEGRLMNLGCATGHPSFVMSCSFTNQVIAQLELWNEKSSGKYEKKVYVLPKHLDEKVAALHLGKLGARLTKLTKDQSDYVSIPVEGPYKPVHYRY.

The substrate site is built by threonine 64, aspartate 139, and glutamate 205. An NAD(+)-binding site is contributed by 206-208 (TTT). Positions 235 and 239 each coordinate substrate. NAD(+)-binding positions include asparagine 240, 269–274 (GYGDVG), glutamate 292, asparagine 327, 348–350 (IGH), and asparagine 397.

Belongs to the adenosylhomocysteinase family. NAD(+) is required as a cofactor.

The catalysed reaction is S-adenosyl-L-homocysteine + H2O = L-homocysteine + adenosine. It participates in amino-acid biosynthesis; L-homocysteine biosynthesis; L-homocysteine from S-adenosyl-L-homocysteine: step 1/1. Adenosylhomocysteine is a competitive inhibitor of S-adenosyl-L-methionine-dependent methyl transferase reactions; therefore adenosylhomocysteinase may play a key role in the control of methylations via regulation of the intracellular concentration of adenosylhomocysteine. The protein is Adenosylhomocysteinase 2 (SAHH2) of Arabidopsis thaliana (Mouse-ear cress).